Reading from the N-terminus, the 704-residue chain is Zinc finger CCHC domain-containing protein 8 (704 aa).

Ala2 carries the N-acetylalanine modification. Residues 16–33 (FDHPEESIPEPVHTRFKD) are compositionally biased toward basic and acidic residues. The segment at 16–43 (FDHPEESIPEPVHTRFKDDDEEDENGVG) is disordered. The stretch at 43-78 (GDAELRERLRQCEETIEQLRAENQELKRKLNILTRP) forms a coiled coil. The segment at 225–242 (PHCFNCGSEEHQMKDCPM) adopts a CCHC-type zinc-finger fold. RBM7 binding stretches follow at residues 284-297 (FKPG…QDAL) and 307-322 (FIYR…GWLK). Thr340 carries the phosphothreonine modification. Disordered regions lie at residues 407 to 516 (APGV…LTLE) and 529 to 599 (LEQA…SPDC). Lys411 participates in a covalent cross-link: Glycyl lysine isopeptide (Lys-Gly) (interchain with G-Cter in SUMO2). Low complexity predominate over residues 454-463 (SQSSESFQFQ). A compositionally biased stretch (pro residues) spans 464–494 (PPLPPDTPPLPRGTPPPIFTPPLPKGTPPLT). Phosphothreonine is present on residues Thr470, Thr477, Thr483, and Thr490. Positions 514-538 (TLEELEEQQRRIWAALEQAESLNSD) form a coiled coil. The span at 547 to 557 (LTGNSVASSPC) shows a compositional bias: polar residues. Thr575 is subject to Phosphothreonine. Phosphoserine is present on Ser596. Thr645 bears the Phosphothreonine mark. Phosphoserine occurs at positions 646, 655, and 692. Positions 656–704 (PIPDMSKFATGITPFEFENMAESTGMYLRIRSLLKNSPRNQQKNKKASE) are MTREX binding.

Belongs to the ZCCHC8 family. As to quaternary structure, component of a nuclear TRAMP-like complex, an ATP-dependent exosome regulatory complex consisting of a helicase (MTREX), an oligadenylate polymerase (TENT4B or TENT4A), and a substrate specific RNA-binding factor (ZCCHC7 or ZCCHC8). Several TRAMP-like complexes exist with specific compositions and are associated with nuclear, or nucleolar RNA exosomes. Identified in the spliceosome C complex. Component of the nuclear exosome targeting (NEXT) complex composed of MTREX, ZCCHC8, and RBM7 that directs a subset of non-coding short-lived RNAs for exosomal degradation. Interacts with proteins involved in RNA processing and degradation such as MTREX and RBM7; interaction with MTREX enhances MTREX RNA helicase activity and bridges between RBM7 and MTREX. Interacts with TERC, the telomerase RNA component. Post-translationally, phosphorylation at Thr-490 by GSK3 is triggered in cells entering mitosis.

The protein resides in the nucleus. Its subcellular location is the nucleoplasm. Scaffolding subunit of the trimeric nuclear exosome targeting (NEXT) complex that is involved in the surveillance and turnover of aberrant transcripts and non-coding RNAs. NEXT functions as an RNA exosome cofactor that directs a subset of non-coding short-lived RNAs for exosomal degradation. May be involved in pre-mRNA splicing. It is required for 3'-end maturation of telomerase RNA component (TERC), TERC 3'-end targeting to the nuclear RNA exosome, and for telomerase function. This chain is Zinc finger CCHC domain-containing protein 8 (ZCCHC8), found in Pongo abelii (Sumatran orangutan).